We begin with the raw amino-acid sequence, 297 residues long: Pyrroline-5-carboxylate reductase 1 (297 aa).

It belongs to the pyrroline-5-carboxylate reductase family.

It is found in the cytoplasm. It carries out the reaction L-proline + NADP(+) = (S)-1-pyrroline-5-carboxylate + NADPH + 2 H(+). The catalysed reaction is L-proline + NAD(+) = (S)-1-pyrroline-5-carboxylate + NADH + 2 H(+). It participates in amino-acid biosynthesis; L-proline biosynthesis; L-proline from L-glutamate 5-semialdehyde: step 1/1. Its function is as follows. Catalyzes the reduction of 1-pyrroline-5-carboxylate (PCA) to L-proline. The chain is Pyrroline-5-carboxylate reductase 1 (proH) from Bacillus spizizenii (strain ATCC 23059 / NRRL B-14472 / W23) (Bacillus subtilis subsp. spizizenii).